Here is a 213-residue protein sequence, read N- to C-terminus: Superoxide dismutase [Fe] (213 aa).

Fe cation-binding residues include His-28, His-82, Asp-164, and His-168.

This sequence belongs to the iron/manganese superoxide dismutase family. As to quaternary structure, homotetramer. Fe cation serves as cofactor.

The enzyme catalyses 2 superoxide + 2 H(+) = H2O2 + O2. In terms of biological role, destroys superoxide anion radicals which are normally produced within the cells and which are toxic to biological systems. The polypeptide is Superoxide dismutase [Fe] (sodB) (Aquifex pyrophilus).